Consider the following 292-residue polypeptide: Tumor necrosis factor alpha-induced protein 8-like protein 3 (292 aa).

The segment at 81 to 107 (DAQPAARSMDSDSGEQSEGEPVTAAGP) is disordered. The tract at residues 109 to 292 (VFSSKSLALQ…INKLLDEKVL (184 aa)) is binding to phosphoinositides.

This sequence belongs to the TNFAIP8 family. As to expression, widely expressed (at protein level). Highly expressed in most carcinoma cell lines.

Its subcellular location is the cytoplasm. It is found in the cell membrane. In terms of biological role, acts as a lipid transfer protein. Preferentially captures and shuttles two lipid second messengers, i.e., phosphatidylinositol 4,5- bisphosphate and phosphatidylinositol 3,4,5-trisphosphate and increases their levels in the plasma membrane. Additionally, may also function as a lipid-presenting protein to enhance the activity of the PI3K-AKT and MEK-ERK pathways. May act as a regulator of tumorigenesis through its activation of phospholipid signaling. The chain is Tumor necrosis factor alpha-induced protein 8-like protein 3 (TNFAIP8L3) from Homo sapiens (Human).